The chain runs to 75 residues: Sec-independent protein translocase protein TatA (75 aa).

The chain crosses the membrane as a helical span at residues 1-21; sequence MGGISIWQLLIIVAIIVLLFG. The segment at 50 to 75 is disordered; it reads DAEFKSLNKDESATAGSEKVKDKEQA.

The protein belongs to the TatA/E family. The Tat system comprises two distinct complexes: a TatABC complex, containing multiple copies of TatA, TatB and TatC subunits, and a separate TatA complex, containing only TatA subunits. Substrates initially bind to the TatABC complex, which probably triggers association of the separate TatA complex to form the active translocon.

The protein localises to the cell inner membrane. Functionally, part of the twin-arginine translocation (Tat) system that transports large folded proteins containing a characteristic twin-arginine motif in their signal peptide across membranes. TatA could form the protein-conducting channel of the Tat system. This chain is Sec-independent protein translocase protein TatA, found in Mannheimia succiniciproducens (strain KCTC 0769BP / MBEL55E).